Reading from the N-terminus, the 303-residue chain is Shikimate kinase 1, chloroplastic (303 aa).

Residues 1-66 constitute a chloroplast transit peptide; it reads MEAAITQRIQ…QRRAVSPAVS (66 aa). 109–116 serves as a coordination point for ATP; sequence GMMGSGKT. T116 contacts Mg(2+). Substrate contacts are provided by D134, R159, and G181. ATP is bound at residue R220.

The protein belongs to the shikimate kinase family. As to quaternary structure, homodimer. Mg(2+) is required as a cofactor.

It is found in the plastid. It localises to the chloroplast. It carries out the reaction shikimate + ATP = 3-phosphoshikimate + ADP + H(+). The protein operates within metabolic intermediate biosynthesis; chorismate biosynthesis; chorismate from D-erythrose 4-phosphate and phosphoenolpyruvate: step 5/7. Its function is as follows. Catalyzes the specific phosphorylation of the 3-hydroxyl group of shikimic acid using ATP as a cosubstrate. In Arabidopsis thaliana (Mouse-ear cress), this protein is Shikimate kinase 1, chloroplastic (SK1).